Reading from the N-terminus, the 387-residue chain is 1,3-propanediol dehydrogenase (387 aa).

The protein belongs to the iron-containing alcohol dehydrogenase family. Homooctamer. It depends on Fe cation as a cofactor.

The enzyme catalyses propane-1,3-diol + NAD(+) = 3-hydroxypropanal + NADH + H(+). Its activity is regulated as follows. Inhibited by the metal chelator 1,10-phenanthroline. Its function is as follows. Catalyzes the reduction of 3-hydroxypropanal. Is considerably less active with glyceraldehyde, propionaldehyde, acetaldehyde, and butyraldehyde. Also catalyzes the oxidation of various primary, secondary, and tertiary alcohols. Is most active with substrates containing two primary alcohol groups separated by one or two carbon atoms. 1,3-propanediol is the preferred substrate. This is 1,3-propanediol dehydrogenase from Citrobacter freundii.